Reading from the N-terminus, the 502-residue chain is Zinc finger C3HC-type protein 1 (502 aa).

Alanine 2 carries the N-acetylalanine modification. Serine 24 is modified (phosphoserine). Residue threonine 28 is modified to Phosphothreonine. The tract at residues 35-74 (LIDEGIAPEEGGVDAQDTSATSQSVNGSPQAEQPSLESTS) is disordered. Polar residues predominate over residues 50–72 (QDTSATSQSVNGSPQAEQPSLES). A phosphoserine mark is found at serine 58 and serine 62. Phosphothreonine is present on threonine 84. Residues 102–156 (CAKYGWVTVECDMLKCSSCQAFLCASLQPAFDFDRYKQRCAELKKALCTAHEKFC) form a C3HC-type zinc finger. Residues 302 to 423 (SSPIPGLEGR…SSRSFFDPTS (122 aa)) are disordered. 2 positions are modified to phosphoserine: serine 321 and serine 329. Phosphothreonine is present on threonine 333. A phosphoserine mark is found at serine 338, serine 344, serine 354, serine 359, and serine 370. Positions 351-360 (RTRSWDSSSP) are enriched in polar residues. Residues 371 to 380 (PTTRTRPVTR) show a composition bias toward low complexity. At serine 381 the chain carries Phosphoserine. The residue at position 384 (threonine 384) is a Phosphothreonine. Serine 395 carries the phosphoserine modification. The Nuclear localization signal signature appears at 396–402 (PLRKAKR). 2 positions are modified to phosphoserine: serine 407 and serine 483. Residues 407-422 (SSSSSDTSSRSFFDPT) are compositionally biased toward low complexity.

In terms of assembly, interacts with TPR; this interaction mediates ZC3HC1 nuclear envelopes (NE)-association but also required for proper positioning of a substantial amount of TPR at the nuclear basket (NB). Post-translationally, phosphorylated. May also be weakly phosphorylated on Tyr residues.

It is found in the nucleus. The protein localises to the nucleus envelope. In terms of biological role, required for proper positioning of a substantial amount of TPR at the nuclear basket (NB) through interaction with TPR. The chain is Zinc finger C3HC-type protein 1 (ZC3HC1) from Pongo abelii (Sumatran orangutan).